A 290-amino-acid polypeptide reads, in one-letter code: 4-hydroxybenzoate octaprenyltransferase (290 aa).

The next 8 helical transmembrane spans lie at Ile-40 to Ile-60, Leu-99 to Leu-119, Thr-120 to Phe-140, Phe-142 to Ala-162, Gly-165 to Tyr-185, Leu-215 to Leu-235, Trp-239 to Ile-259, and Ser-267 to Phe-287.

Belongs to the UbiA prenyltransferase family. Requires Mg(2+) as cofactor.

It localises to the cell inner membrane. It catalyses the reaction all-trans-octaprenyl diphosphate + 4-hydroxybenzoate = 4-hydroxy-3-(all-trans-octaprenyl)benzoate + diphosphate. Its pathway is cofactor biosynthesis; ubiquinone biosynthesis. Functionally, catalyzes the prenylation of para-hydroxybenzoate (PHB) with an all-trans polyprenyl group. Mediates the second step in the final reaction sequence of ubiquinone-8 (UQ-8) biosynthesis, which is the condensation of the polyisoprenoid side chain with PHB, generating the first membrane-bound Q intermediate 3-octaprenyl-4-hydroxybenzoate. The chain is 4-hydroxybenzoate octaprenyltransferase from Alcanivorax borkumensis (strain ATCC 700651 / DSM 11573 / NCIMB 13689 / SK2).